A 569-amino-acid polypeptide reads, in one-letter code: Urease subunit beta (569 aa).

The 439-residue stretch at 131-569 (GGIDTHIHFI…VSLGQLYCLF (439 aa)) folds into the Urease domain. Ni(2+) contacts are provided by His136, His138, and Lys219. Lys219 is subject to N6-carboxylysine. His221 is a substrate binding site. Residues His248 and His274 each contribute to the Ni(2+) site. His322 acts as the Proton donor in catalysis. Residue Asp362 coordinates Ni(2+).

It belongs to the metallo-dependent hydrolases superfamily. Urease alpha subunit family. Heterohexamer of 3 UreA (alpha) and 3 UreB (beta) subunits. It depends on Ni cation as a cofactor. Post-translationally, carboxylation allows a single lysine to coordinate two nickel ions.

Its subcellular location is the cytoplasm. The catalysed reaction is urea + 2 H2O + H(+) = hydrogencarbonate + 2 NH4(+). It participates in nitrogen metabolism; urea degradation; CO(2) and NH(3) from urea (urease route): step 1/1. This Helicobacter hepaticus (strain ATCC 51449 / 3B1) protein is Urease subunit beta.